The chain runs to 188 residues: Ion-translocating oxidoreductase complex subunit B (188 aa).

The interval 1-26 (MMSLWIAIGALSTLALVSGVVLGFAA) is hydrophobic. The 4Fe-4S domain maps to 32–91 (DEDPVVEQVDAILPQSQCGQCGYPGCRPYAEAVSTGGEKINKCAPGGEQVMLKLAELLAV). [4Fe-4S] cluster-binding residues include Cys49, Cys52, Cys57, Cys74, Cys117, Cys120, Cys123, Cys127, Cys147, Cys150, Cys153, and Cys157. 2 consecutive 4Fe-4S ferredoxin-type domains span residues 108–137 (KVAF…GATR) and 138–167 (AMHT…MIPV).

The protein belongs to the 4Fe4S bacterial-type ferredoxin family. RnfB subfamily. As to quaternary structure, the complex is composed of six subunits: RnfA, RnfB, RnfC, RnfD, RnfE and RnfG. [4Fe-4S] cluster is required as a cofactor.

The protein resides in the cell inner membrane. Part of a membrane-bound complex that couples electron transfer with translocation of ions across the membrane. The chain is Ion-translocating oxidoreductase complex subunit B from Yersinia pestis bv. Antiqua (strain Antiqua).